A 785-amino-acid chain; its full sequence is DNA ligase (785 aa).

Residues 32–36 (DAEYD), 81–82 (SL), and Glu-121 contribute to the NAD(+) site. Residue Lys-123 is the N6-AMP-lysine intermediate of the active site. Residues Arg-144, Glu-181, Lys-294, and Lys-318 each contribute to the NAD(+) site. Zn(2+) contacts are provided by Cys-412, Cys-415, Cys-442, and Cys-448. One can recognise a BRCT domain in the interval 702–785 (VEGLPEAGHT…AFLAKHNIPV (84 aa)).

It belongs to the NAD-dependent DNA ligase family. LigA subfamily. Requires Mg(2+) as cofactor. The cofactor is Mn(2+).

The enzyme catalyses NAD(+) + (deoxyribonucleotide)n-3'-hydroxyl + 5'-phospho-(deoxyribonucleotide)m = (deoxyribonucleotide)n+m + AMP + beta-nicotinamide D-nucleotide.. In terms of biological role, DNA ligase that catalyzes the formation of phosphodiester linkages between 5'-phosphoryl and 3'-hydroxyl groups in double-stranded DNA using NAD as a coenzyme and as the energy source for the reaction. It is essential for DNA replication and repair of damaged DNA. This Pseudomonas fluorescens (strain SBW25) protein is DNA ligase.